The primary structure comprises 164 residues: PTS system sorbose-specific EIIB component (164 aa).

The 164-residue stretch at M1 to E164 folds into the PTS EIIB type-4 domain. The active-site Pros-phosphohistidine intermediate is the H14. H14 carries the phosphohistidine; by EIIA modification.

Dimer of dimers.

The protein localises to the cytoplasm. The enzyme catalyses keto-L-sorbose(out) + N(pros)-phospho-L-histidyl-[protein] = L-sorbose 1-phosphate(in) + L-histidyl-[protein]. In terms of biological role, the phosphoenolpyruvate-dependent sugar phosphotransferase system (PTS), a major carbohydrate active transport system, catalyzes the phosphorylation of incoming sugar substrates concomitant with their translocation across the cell membrane. The enzyme II SorABFM PTS system is involved in L-sorbose transport. The polypeptide is PTS system sorbose-specific EIIB component (Klebsiella pneumoniae).